We begin with the raw amino-acid sequence, 303 residues long: Methionyl-tRNA formyltransferase (303 aa).

A (6S)-5,6,7,8-tetrahydrofolate-binding site is contributed by serine 108–proline 111.

The protein belongs to the Fmt family.

It catalyses the reaction L-methionyl-tRNA(fMet) + (6R)-10-formyltetrahydrofolate = N-formyl-L-methionyl-tRNA(fMet) + (6S)-5,6,7,8-tetrahydrofolate + H(+). Functionally, attaches a formyl group to the free amino group of methionyl-tRNA(fMet). The formyl group appears to play a dual role in the initiator identity of N-formylmethionyl-tRNA by promoting its recognition by IF2 and preventing the misappropriation of this tRNA by the elongation apparatus. In Rickettsia africae (strain ESF-5), this protein is Methionyl-tRNA formyltransferase.